Consider the following 315-residue polypeptide: Aspartate carbamoyltransferase catalytic subunit (315 aa).

Residues Arg64 and Thr65 each coordinate carbamoyl phosphate. Lys92 contacts L-aspartate. Positions 114, 142, and 145 each coordinate carbamoyl phosphate. L-aspartate contacts are provided by Arg176 and Arg230. The carbamoyl phosphate site is built by Gly271 and Pro272.

This sequence belongs to the aspartate/ornithine carbamoyltransferase superfamily. ATCase family. As to quaternary structure, heterododecamer (2C3:3R2) of six catalytic PyrB chains organized as two trimers (C3), and six regulatory PyrI chains organized as three dimers (R2).

It catalyses the reaction carbamoyl phosphate + L-aspartate = N-carbamoyl-L-aspartate + phosphate + H(+). It functions in the pathway pyrimidine metabolism; UMP biosynthesis via de novo pathway; (S)-dihydroorotate from bicarbonate: step 2/3. Catalyzes the condensation of carbamoyl phosphate and aspartate to form carbamoyl aspartate and inorganic phosphate, the committed step in the de novo pyrimidine nucleotide biosynthesis pathway. In Lawsonia intracellularis (strain PHE/MN1-00), this protein is Aspartate carbamoyltransferase catalytic subunit.